A 432-amino-acid chain; its full sequence is DEAD-box ATP-dependent RNA helicase 56 (432 aa).

Residues 1 to 28 (MAEAEVKDNEVYEEDLVDYEEEVENGTD) are a coiled coil. The Q motif motif lies at 51 to 79 (SGFRDFLLKPELLRAIQDCGFEHPSEVQH). The 174-residue stretch at 82–255 (IPQAILGMDV…KKFMQDPMEI (174 aa)) folds into the Helicase ATP-binding domain. 95-102 (AKSGMGKT) is an ATP binding site. The DEAD box signature appears at 202-205 (DECD). Residues 283-428 (KLNDLLDALD…ELPEQIDTST (146 aa)) form the Helicase C-terminal domain.

Belongs to the DEAD box helicase family. DECD subfamily. In terms of assembly, homodimer and heterodimer with AIP2. Interacts with API5.

It is found in the nucleus. It catalyses the reaction ATP + H2O = ADP + phosphate + H(+). ATP-binding RNA helicase involved in pre-mRNA splicing. Required for the export of mRNA out of the nucleus. Required for tapetal programmed cell death (PCD) and degeneration during anther development. Forms dimer with AIP2 and binds the promoter region of the cysteine protease CP1. Can complement the yeast RNA helicase SUB2. Plants silencing AIP1 and AIP2 are male sterile. In Oryza sativa subsp. japonica (Rice), this protein is DEAD-box ATP-dependent RNA helicase 56.